A 223-amino-acid polypeptide reads, in one-letter code: Endonuclease V (223 aa).

Mg(2+) is bound by residues aspartate 35 and aspartate 103.

Belongs to the endonuclease V family. It depends on Mg(2+) as a cofactor.

The protein resides in the cytoplasm. The enzyme catalyses Endonucleolytic cleavage at apurinic or apyrimidinic sites to products with a 5'-phosphate.. Functionally, DNA repair enzyme involved in the repair of deaminated bases. Selectively cleaves double-stranded DNA at the second phosphodiester bond 3' to a deoxyinosine leaving behind the intact lesion on the nicked DNA. In Salmonella paratyphi A (strain ATCC 9150 / SARB42), this protein is Endonuclease V.